A 162-amino-acid polypeptide reads, in one-letter code: Ribosomal RNA large subunit methyltransferase H (162 aa).

S-adenosyl-L-methionine-binding residues include Leu-78 and Gly-110.

Belongs to the RNA methyltransferase RlmH family. In terms of assembly, homodimer.

It is found in the cytoplasm. It catalyses the reaction pseudouridine(1915) in 23S rRNA + S-adenosyl-L-methionine = N(3)-methylpseudouridine(1915) in 23S rRNA + S-adenosyl-L-homocysteine + H(+). Specifically methylates the pseudouridine at position 1915 (m3Psi1915) in 23S rRNA. This Bradyrhizobium sp. (strain ORS 278) protein is Ribosomal RNA large subunit methyltransferase H.